Here is a 569-residue protein sequence, read N- to C-terminus: MELSELIEVTRVRDAFMRKGPRPAQVGDICIFGHHLIFAPTTVGKEVPDNAEEFWLLHKAVDRVLCEPISKENPQRGGLLALKCKNFLLIIFEIGDLEICRATARTIESLSNINGFLHDYAFFYNSPFTILDDGWSAFDLEQEFARLMLSTDAFRISSVNENFAICPTYPEKLIVPKGIGDDYLKISATFREGGRFPVLSYFHKETKSPLVRCSQPLIGPTNRRCREDETILNSMITVNRGYIIDTRSKSSATAAKAKGGGAEPQGNYRQWRYIQCPIPRQREIHDALTRMVDVCSERKVTSDRWVSRVGQAGWLSSVAASLEAAANVAQCIYNERLEEVPVVIHGGDGLDSTLIASSLAQILLDADARTIRGFESVIEREWICGGHPFSLRNNHCAYAEGTVTGPFESPVFLVFLDAVHQMIAQYPMSFEFDENFLIFLFEHAYASEFGSFLGNCEKEKKDNGIRKKTVSLWSHVHHPENMKQFVNVCYDPTPGVIWPSIAPQCIKIWDRLFFRWQRPDNSWSTPETETIQSLADHWKLREKELIAKASSLRRSVVELSRELRVLSPM.

The Myotubularin phosphatase domain maps to 134–513 (GWSAFDLEQE…QCIKIWDRLF (380 aa)).

Belongs to the protein-tyrosine phosphatase family. Non-receptor class myotubularin subfamily. Heterodimer with lipid phosphatase mtm-6.

The protein resides in the cytoplasm. Its subcellular location is the membrane. In terms of biological role, may act as a regulatory subunit for mtm-6. In association with phosphatase mtm-6, plays a role in endosome trafficking probably by regulating phosphatidylinositol-3-phosphate levels. Regulates fluid phase endocytosis in coelomocytes. Regulates posterior migration of QL neuroblast descendants and the anterior migration of QR neuroblast descendants and HSN neurons during larval development probably by controlling Wnt ligand secretion through the regulation of sorting receptor mig-14 trafficking. Involved in the formation of correct synapse number in DA9 motor neurons. This Caenorhabditis elegans protein is Myotubularin-related protein 9.